We begin with the raw amino-acid sequence, 351 residues long: D-threonate 4-phosphate dehydrogenase (351 aa).

Substrate is bound by residues His147 and Thr148. Residues His177, His221, and His276 each contribute to the a divalent metal cation site. Residues Lys284, Asn293, and Arg302 each coordinate substrate.

This sequence belongs to the PdxA family. PdxA2 subfamily. In terms of assembly, homodimer. Requires a divalent metal cation as cofactor.

It catalyses the reaction 4-O-phospho-D-threonate + NAD(+) = dihydroxyacetone phosphate + CO2 + NADH. Catalyzes the NAD-dependent oxidation and subsequent decarboxylation of D-threonate 4-phosphate to produce dihydroxyacetone phosphate (DHAP). Can also use 4-hydroxy-L-threonine 4-phosphate as substrate. The sequence is that of D-threonate 4-phosphate dehydrogenase from Bordetella bronchiseptica (strain ATCC BAA-588 / NCTC 13252 / RB50) (Alcaligenes bronchisepticus).